Consider the following 466-residue polypeptide: Ankyrin repeat and SOCS box protein 18 (466 aa).

ANK repeat units lie at residues 119-148 (ELTTPLCIAAAHGHTACVRHLLGRGADPDA), 151-180 (GGRGALHEACLGGHTACVRLLLQHRADPDL), 184-213 (EGLAPLHLCRTAASLGCAQALLEHGASVQR), 218-247 (GRDTPLHVAAQRGLDEHARLYLGRGAHVDA), 251-288 (RGETALSAACGAARRPDEHGRCLRLCALLLRRGAEADA), and 292-321 (DERSPLHKACGHASHSLARLLLRHGADAGA). The 59-residue stretch at 405–463 (QMHKPFYQSLFALALTPRCLQHLCRCALRRLFGKRCFDLIPLLPLPKPLQNYLLLEPQG) folds into the SOCS box domain.

Belongs to the ankyrin SOCS box (ASB) family.

It participates in protein modification; protein ubiquitination. Its function is as follows. May be a substrate-recognition component of a SCF-like ECS (Elongin-Cullin-SOCS-box protein) E3 ubiquitin-protein ligase complex which mediates the ubiquitination and subsequent proteasomal degradation of target proteins. This Homo sapiens (Human) protein is Ankyrin repeat and SOCS box protein 18 (ASB18).